We begin with the raw amino-acid sequence, 705 residues long: Cell cycle serine/threonine-protein kinase CDC5/MSD2 (705 aa).

Phosphothreonine is present on Thr-23. Basic and acidic residues predominate over residues 41–53 (QTKRLDPNNDHHH). A disordered region spans residues 41–63 (QTKRLDPNNDHHHQPAQKKKREK). Residues 82–337 (YHRGHFLGEG…LTEIMDYVWF (256 aa)) form the Protein kinase domain. Residues 88–96 (LGEGGFARC) and Lys-110 contribute to the ATP site. The active-site Proton acceptor is the Asp-204. Ser-419 bears the Phosphoserine mark. A POLO box 1 domain is found at 513-595 (IVTKWVDYSN…VDFFAKYMKA (83 aa)). 4 residues coordinate Zn(2+): Glu-553, His-569, His-609, and Asp-612. The region spanning 614 to 700 (FLRRYTRYKP…IKEGLKQKST (87 aa)) is the POLO box 2 domain.

The protein belongs to the protein kinase superfamily. Ser/Thr protein kinase family. CDC5/Polo subfamily. Interacts with CDC48; the interaction is likely to result in CDC5 degradation. Interacts with CSA1.

It is found in the cytoplasm. Its subcellular location is the cytoskeleton. The protein localises to the microtubule organizing center. It localises to the spindle pole body. It catalyses the reaction L-seryl-[protein] + ATP = O-phospho-L-seryl-[protein] + ADP + H(+). It carries out the reaction L-threonyl-[protein] + ATP = O-phospho-L-threonyl-[protein] + ADP + H(+). Its function is as follows. Protein kinase required for the cell cycle where it is involved in mitotic exit. A component of the fear (CDC14 early anaphase release) network which promotes CDC14 release from the nucleolus during early anaphase. Phosphorylates SCC1/MCD1 and NET1. The polypeptide is Cell cycle serine/threonine-protein kinase CDC5/MSD2 (CDC5) (Saccharomyces cerevisiae (strain ATCC 204508 / S288c) (Baker's yeast)).